A 78-amino-acid chain; its full sequence is NAD(P)H-quinone oxidoreductase subunit L (78 aa).

A run of 2 helical transmembrane segments spans residues 10-30 and 47-67; these read IILIIYAALAGAYFLVMPAIV and VFMYFLMFLFFPGMLVLSPFL.

Belongs to the complex I NdhL subunit family. As to quaternary structure, NDH-1 can be composed of about 15 different subunits; different subcomplexes with different compositions have been identified which probably have different functions.

The protein localises to the cellular thylakoid membrane. The enzyme catalyses a plastoquinone + NADH + (n+1) H(+)(in) = a plastoquinol + NAD(+) + n H(+)(out). It carries out the reaction a plastoquinone + NADPH + (n+1) H(+)(in) = a plastoquinol + NADP(+) + n H(+)(out). Functionally, NDH-1 shuttles electrons from an unknown electron donor, via FMN and iron-sulfur (Fe-S) centers, to quinones in the respiratory and/or the photosynthetic chain. The immediate electron acceptor for the enzyme in this species is believed to be plastoquinone. Couples the redox reaction to proton translocation, and thus conserves the redox energy in a proton gradient. Cyanobacterial NDH-1 also plays a role in inorganic carbon-concentration. The sequence is that of NAD(P)H-quinone oxidoreductase subunit L from Trichodesmium erythraeum (strain IMS101).